A 356-amino-acid chain; its full sequence is Phosphoserine aminotransferase (356 aa).

Residue Arg41 coordinates L-glutamate. Residues 75 to 76 (AS), Trp99, Thr147, Asp166, and Gln189 each bind pyridoxal 5'-phosphate. Lys190 is subject to N6-(pyridoxal phosphate)lysine. 231-232 (NT) is a pyridoxal 5'-phosphate binding site.

It belongs to the class-V pyridoxal-phosphate-dependent aminotransferase family. SerC subfamily. As to quaternary structure, homodimer. Pyridoxal 5'-phosphate is required as a cofactor.

The protein resides in the cytoplasm. It catalyses the reaction O-phospho-L-serine + 2-oxoglutarate = 3-phosphooxypyruvate + L-glutamate. The catalysed reaction is 4-(phosphooxy)-L-threonine + 2-oxoglutarate = (R)-3-hydroxy-2-oxo-4-phosphooxybutanoate + L-glutamate. It participates in amino-acid biosynthesis; L-serine biosynthesis; L-serine from 3-phospho-D-glycerate: step 2/3. Its pathway is cofactor biosynthesis; pyridoxine 5'-phosphate biosynthesis; pyridoxine 5'-phosphate from D-erythrose 4-phosphate: step 3/5. Functionally, catalyzes the reversible conversion of 3-phosphohydroxypyruvate to phosphoserine and of 3-hydroxy-2-oxo-4-phosphonooxybutanoate to phosphohydroxythreonine. The protein is Phosphoserine aminotransferase of Phocaeicola vulgatus (strain ATCC 8482 / DSM 1447 / JCM 5826 / CCUG 4940 / NBRC 14291 / NCTC 11154) (Bacteroides vulgatus).